Consider the following 581-residue polypeptide: Arginine--tRNA ligase (581 aa).

Positions 126 to 136 match the 'HIGH' region motif; the sequence is PNLAKEMHVGH.

It belongs to the class-I aminoacyl-tRNA synthetase family. As to quaternary structure, monomer.

The protein localises to the cytoplasm. It carries out the reaction tRNA(Arg) + L-arginine + ATP = L-arginyl-tRNA(Arg) + AMP + diphosphate. This is Arginine--tRNA ligase from Shewanella piezotolerans (strain WP3 / JCM 13877).